We begin with the raw amino-acid sequence, 334 residues long: Holliday junction branch migration complex subunit RuvB (334 aa).

The interval 4–184 (ADRIISPNAT…FGIVQRLEFY (181 aa)) is large ATPase domain (RuvB-L). ATP is bound by residues Ile23, Arg24, Gly65, Lys68, Thr69, Thr70, 131–133 (EDY), Arg174, Tyr184, and Arg221. A Mg(2+)-binding site is contributed by Thr69. Residues 185–255 (SVEDLRHIVA…VADKALNMLN (71 aa)) form a small ATPAse domain (RuvB-S) region. The interval 258–334 (LHGFDHMDRR…YNHFGLTMPE (77 aa)) is head domain (RuvB-H). DNA is bound by residues Arg313 and Arg318.

It belongs to the RuvB family. Homohexamer. Forms an RuvA(8)-RuvB(12)-Holliday junction (HJ) complex. HJ DNA is sandwiched between 2 RuvA tetramers; dsDNA enters through RuvA and exits via RuvB. An RuvB hexamer assembles on each DNA strand where it exits the tetramer. Each RuvB hexamer is contacted by two RuvA subunits (via domain III) on 2 adjacent RuvB subunits; this complex drives branch migration. In the full resolvosome a probable DNA-RuvA(4)-RuvB(12)-RuvC(2) complex forms which resolves the HJ.

It localises to the cytoplasm. It catalyses the reaction ATP + H2O = ADP + phosphate + H(+). Its function is as follows. The RuvA-RuvB-RuvC complex processes Holliday junction (HJ) DNA during genetic recombination and DNA repair, while the RuvA-RuvB complex plays an important role in the rescue of blocked DNA replication forks via replication fork reversal (RFR). RuvA specifically binds to HJ cruciform DNA, conferring on it an open structure. The RuvB hexamer acts as an ATP-dependent pump, pulling dsDNA into and through the RuvAB complex. RuvB forms 2 homohexamers on either side of HJ DNA bound by 1 or 2 RuvA tetramers; 4 subunits per hexamer contact DNA at a time. Coordinated motions by a converter formed by DNA-disengaged RuvB subunits stimulates ATP hydrolysis and nucleotide exchange. Immobilization of the converter enables RuvB to convert the ATP-contained energy into a lever motion, pulling 2 nucleotides of DNA out of the RuvA tetramer per ATP hydrolyzed, thus driving DNA branch migration. The RuvB motors rotate together with the DNA substrate, which together with the progressing nucleotide cycle form the mechanistic basis for DNA recombination by continuous HJ branch migration. Branch migration allows RuvC to scan DNA until it finds its consensus sequence, where it cleaves and resolves cruciform DNA. The sequence is that of Holliday junction branch migration complex subunit RuvB from Hahella chejuensis (strain KCTC 2396).